The sequence spans 196 residues: Orotate phosphoribosyltransferase (196 aa).

Residues arginine 102, lysine 103, lysine 106, histidine 108, and 129–137 (EDVVTTGGS) each bind 5-phospho-alpha-D-ribose 1-diphosphate. The orotate site is built by threonine 133 and arginine 161.

Belongs to the purine/pyrimidine phosphoribosyltransferase family. PyrE subfamily. In terms of assembly, homodimer. Mg(2+) serves as cofactor.

The enzyme catalyses orotidine 5'-phosphate + diphosphate = orotate + 5-phospho-alpha-D-ribose 1-diphosphate. It participates in pyrimidine metabolism; UMP biosynthesis via de novo pathway; UMP from orotate: step 1/2. In terms of biological role, catalyzes the transfer of a ribosyl phosphate group from 5-phosphoribose 1-diphosphate to orotate, leading to the formation of orotidine monophosphate (OMP). This Prochlorococcus marinus (strain MIT 9303) protein is Orotate phosphoribosyltransferase.